Here is a 381-residue protein sequence, read N- to C-terminus: Ribosome assembly 1 protein (381 aa).

Met1 is modified (N-acetylmethionine). 3 disordered regions span residues 1 to 38 (MNYN…IKRQ), 164 to 216 (KDTF…DRDE), and 350 to 381 (FGSS…TRNK). A Phosphoserine modification is found at Ser172. Residues 359 to 371 (NHYKPNYKNRKPN) show a composition bias toward basic residues.

The protein resides in the nucleus. Involved in a late nucleoplasmic step of 60S ribosomal subunit assembly. This chain is Ribosome assembly 1 protein (RSA1), found in Saccharomyces cerevisiae (strain ATCC 204508 / S288c) (Baker's yeast).